Consider the following 363-residue polypeptide: 3-dehydroquinate synthase (363 aa).

NAD(+) contacts are provided by residues 134-135, lysine 147, and lysine 156; that span reads TT. Zn(2+) contacts are provided by glutamate 189, histidine 254, and histidine 271.

The protein belongs to the sugar phosphate cyclases superfamily. Dehydroquinate synthase family. Requires Co(2+) as cofactor. It depends on Zn(2+) as a cofactor. The cofactor is NAD(+).

The protein resides in the cytoplasm. The catalysed reaction is 7-phospho-2-dehydro-3-deoxy-D-arabino-heptonate = 3-dehydroquinate + phosphate. It functions in the pathway metabolic intermediate biosynthesis; chorismate biosynthesis; chorismate from D-erythrose 4-phosphate and phosphoenolpyruvate: step 2/7. Functionally, catalyzes the conversion of 3-deoxy-D-arabino-heptulosonate 7-phosphate (DAHP) to dehydroquinate (DHQ). This is 3-dehydroquinate synthase from Prochlorococcus marinus (strain MIT 9312).